The sequence spans 143 residues: Hemoglobin subunit alpha-1 (143 aa).

N-acetylserine is present on Ser-2. Residues 2 to 143 (SLSTKDKETV…VSLALAEKYR (142 aa)) form the Globin domain. His-60 is an O2 binding site. His-89 lines the heme b pocket.

It belongs to the globin family. Hb1 is a heterotetramer of two alpha-1 chains and two beta-1 chains. Red blood cells.

In terms of biological role, involved in oxygen transport from gills to the various peripheral tissues. The sequence is that of Hemoglobin subunit alpha-1 from Liparis tunicatus (Kelp snailfish).